A 391-amino-acid chain; its full sequence is Protein CapJ (391 aa).

Its pathway is capsule biogenesis; capsule polysaccharide biosynthesis. Functionally, required for the biosynthesis of type 1 capsular polysaccharide. This Staphylococcus aureus protein is Protein CapJ (capJ).